Here is a 426-residue protein sequence, read N- to C-terminus: High affinity 3',5'-cyclic-AMP phosphodiesterase 7A (426 aa).

The region spanning 80 to 402 is the PDEase domain; it reads LDEDYNGQAK…ASWKGLQRQQ (323 aa). His-156 acts as the Proton donor in catalysis. A divalent metal cation contacts are provided by His-160, His-196, Asp-197, and Asp-306.

It belongs to the cyclic nucleotide phosphodiesterase family. PDE7 subfamily. As to quaternary structure, interacts with CBFA2T3. A divalent metal cation serves as cofactor.

It localises to the cytoplasm. The protein resides in the cytosol. The enzyme catalyses 3',5'-cyclic AMP + H2O = AMP + H(+). It participates in purine metabolism; 3',5'-cyclic AMP degradation; AMP from 3',5'-cyclic AMP: step 1/1. Hydrolyzes the second messenger cAMP, which is a key regulator of many important physiological processes. May have a role in muscle signal transduction. The protein is High affinity 3',5'-cyclic-AMP phosphodiesterase 7A (Pde7a) of Rattus norvegicus (Rat).